Reading from the N-terminus, the 590-residue chain is Arginine--tRNA ligase (590 aa).

The 'HIGH' region signature appears at 131 to 141 (PNIAKEMHVGH).

The protein belongs to the class-I aminoacyl-tRNA synthetase family. In terms of assembly, monomer.

It is found in the cytoplasm. The catalysed reaction is tRNA(Arg) + L-arginine + ATP = L-arginyl-tRNA(Arg) + AMP + diphosphate. This is Arginine--tRNA ligase from Synechococcus sp. (strain RCC307).